Reading from the N-terminus, the 121-residue chain is Large ribosomal subunit protein uL14c (121 aa).

It belongs to the universal ribosomal protein uL14 family. Part of the 50S ribosomal subunit.

It is found in the plastid. Its subcellular location is the chloroplast. Its function is as follows. Binds to 23S rRNA. The protein is Large ribosomal subunit protein uL14c of Thalassiosira pseudonana (Marine diatom).